A 425-amino-acid chain; its full sequence is Serine--tRNA ligase (425 aa).

An L-serine-binding site is contributed by 231–233 (TAE). 262-264 (RSE) serves as a coordination point for ATP. An L-serine-binding site is contributed by Glu285. 349-352 (EISS) lines the ATP pocket. Ser385 serves as a coordination point for L-serine.

This sequence belongs to the class-II aminoacyl-tRNA synthetase family. Type-1 seryl-tRNA synthetase subfamily. As to quaternary structure, homodimer. The tRNA molecule binds across the dimer.

The protein localises to the cytoplasm. It catalyses the reaction tRNA(Ser) + L-serine + ATP = L-seryl-tRNA(Ser) + AMP + diphosphate + H(+). It carries out the reaction tRNA(Sec) + L-serine + ATP = L-seryl-tRNA(Sec) + AMP + diphosphate + H(+). Its pathway is aminoacyl-tRNA biosynthesis; selenocysteinyl-tRNA(Sec) biosynthesis; L-seryl-tRNA(Sec) from L-serine and tRNA(Sec): step 1/1. Catalyzes the attachment of serine to tRNA(Ser). Is also able to aminoacylate tRNA(Sec) with serine, to form the misacylated tRNA L-seryl-tRNA(Sec), which will be further converted into selenocysteinyl-tRNA(Sec). The polypeptide is Serine--tRNA ligase (Bartonella tribocorum (strain CIP 105476 / IBS 506)).